Here is a 180-residue protein sequence, read N- to C-terminus: Crossover junction endodeoxyribonuclease RuvC (180 aa).

Active-site residues include Asp-7, Glu-66, and Asp-138. Mg(2+) is bound by residues Asp-7, Glu-66, and Asp-138.

It belongs to the RuvC family. Homodimer which binds Holliday junction (HJ) DNA. The HJ becomes 2-fold symmetrical on binding to RuvC with unstacked arms; it has a different conformation from HJ DNA in complex with RuvA. In the full resolvosome a probable DNA-RuvA(4)-RuvB(12)-RuvC(2) complex forms which resolves the HJ. Mg(2+) serves as cofactor.

The protein localises to the cytoplasm. It catalyses the reaction Endonucleolytic cleavage at a junction such as a reciprocal single-stranded crossover between two homologous DNA duplexes (Holliday junction).. The RuvA-RuvB-RuvC complex processes Holliday junction (HJ) DNA during genetic recombination and DNA repair. Endonuclease that resolves HJ intermediates. Cleaves cruciform DNA by making single-stranded nicks across the HJ at symmetrical positions within the homologous arms, yielding a 5'-phosphate and a 3'-hydroxyl group; requires a central core of homology in the junction. The consensus cleavage sequence is 5'-(A/T)TT(C/G)-3'. Cleavage occurs on the 3'-side of the TT dinucleotide at the point of strand exchange. HJ branch migration catalyzed by RuvA-RuvB allows RuvC to scan DNA until it finds its consensus sequence, where it cleaves and resolves the cruciform DNA. The sequence is that of Crossover junction endodeoxyribonuclease RuvC from Burkholderia orbicola (strain AU 1054).